The following is a 555-amino-acid chain: Suppressor of tumorigenicity 7 protein-like (555 aa).

The next 2 membrane-spanning stretches (helical) occupy residues glycine 36 to leucine 56 and phenylalanine 80 to tryptophan 100. The interval threonine 126–asparagine 148 is disordered.

Belongs to the ST7 family.

The protein localises to the membrane. The polypeptide is Suppressor of tumorigenicity 7 protein-like (ST7L) (Bos taurus (Bovine)).